The primary structure comprises 96 residues: Putative septation protein SpoVG (96 aa).

The protein belongs to the SpoVG family.

Its function is as follows. Could be involved in septation. The sequence is that of Putative septation protein SpoVG from Geobacillus sp. (strain WCH70).